Reading from the N-terminus, the 322-residue chain is Epoxide hydrolase A (322 aa).

One can recognise an AB hydrolase-1 domain in the interval 27–131; the sequence is PVVILAHGFP…AVAALSVPAL (105 aa). Asp103 functions as the Nucleophile in the catalytic mechanism. His298 functions as the Proton acceptor in the catalytic mechanism.

The protein belongs to the AB hydrolase superfamily. Epoxide hydrolase family. As to quaternary structure, homodimer.

The enzyme catalyses an epoxide + H2O = an ethanediol. Could be involved in detoxification of extraneous host-cell epoxides. Catalyzes the hydrolysis of epoxide-containing substrates. This Mycobacterium tuberculosis (strain ATCC 25618 / H37Rv) protein is Epoxide hydrolase A (ephA).